A 171-amino-acid polypeptide reads, in one-letter code: Large ribosomal subunit protein bL9 (171 aa).

Belongs to the bacterial ribosomal protein bL9 family.

In terms of biological role, binds to the 23S rRNA. In Rickettsia africae (strain ESF-5), this protein is Large ribosomal subunit protein bL9.